The primary structure comprises 209 residues: NADH-ubiquinone oxidoreductase subunit 9 (209 aa).

Belongs to the complex I 30 kDa subunit family. Complex I is composed of about 45 different subunits.

Its subcellular location is the mitochondrion inner membrane. The catalysed reaction is a ubiquinone + NADH + 5 H(+)(in) = a ubiquinol + NAD(+) + 4 H(+)(out). In terms of biological role, core subunit of the mitochondrial membrane respiratory chain NADH dehydrogenase (Complex I) that is believed to belong to the minimal assembly required for catalysis. Complex I functions in the transfer of electrons from NADH to the respiratory chain. The immediate electron acceptor for the enzyme is believed to be ubiquinone. This is NADH-ubiquinone oxidoreductase subunit 9 (nad9) from Dictyostelium discoideum (Social amoeba).